The following is a 647-amino-acid chain: 5-aminolevulinate synthase, non-specific, mitochondrial (647 aa).

The transit peptide at 1–56 directs the protein to the mitochondrion; that stretch reads METVVRRCPFLSRVPQAFLQKAGKSLLFYAQNCPKMMEIGAKPAPRALSTSAVLCQ. Residues 61 to 112 are disordered; that stretch reads TPPANEKDKAAKAEVQQAPDGSQQAPDGSQQTADGTQLPSGHPSLASSQGTG. A compositionally biased stretch (polar residues) spans 79 to 112; the sequence is PDGSQQAPDGSQQTADGTQLPSGHPSLASSQGTG. Positions 224, 341, and 360 each coordinate substrate. Residues S393, H421, and T449 each coordinate pyridoxal 5'-phosphate. K452 is an active-site residue. At K452 the chain carries N6-(pyridoxal phosphate)lysine. Residues T481 and T482 each coordinate pyridoxal 5'-phosphate. T569 is a binding site for substrate. At P583 the chain carries Hydroxyproline.

It belongs to the class-II pyridoxal-phosphate-dependent aminotransferase family. Homodimer. Interacts (hydroxylated form) with VHL. Requires pyridoxal 5'-phosphate as cofactor. In terms of processing, in normoxia, is hydroxylated at Pro-583, promoting interaction with VHL, initiating ubiquitination and subsequent degradation via the proteasome. Ubiquitinated; in normoxia following hydroxylation and interaction with VHL, leading to its subsequent degradation via the proteasome.

The protein localises to the mitochondrion inner membrane. The enzyme catalyses succinyl-CoA + glycine + H(+) = 5-aminolevulinate + CO2 + CoA. The protein operates within porphyrin-containing compound metabolism; protoporphyrin-IX biosynthesis; 5-aminolevulinate from glycine: step 1/1. Catalyzes the pyridoxal 5'-phosphate (PLP)-dependent condensation of succinyl-CoA and glycine to form aminolevulinic acid (ALA), with CoA and CO2 as by-products. This Bos taurus (Bovine) protein is 5-aminolevulinate synthase, non-specific, mitochondrial (ALAS1).